The primary structure comprises 73 residues: Translation initiation factor IF-1 (73 aa).

An S1-like domain is found at 1–73 (MSKKKDVIEM…TRGRITYRYK (73 aa)).

The protein belongs to the IF-1 family. Component of the 30S ribosomal translation pre-initiation complex which assembles on the 30S ribosome in the order IF-2 and IF-3, IF-1 and N-formylmethionyl-tRNA(fMet); mRNA recruitment can occur at any time during PIC assembly.

It localises to the cytoplasm. One of the essential components for the initiation of protein synthesis. Stabilizes the binding of IF-2 and IF-3 on the 30S subunit to which N-formylmethionyl-tRNA(fMet) subsequently binds. Helps modulate mRNA selection, yielding the 30S pre-initiation complex (PIC). Upon addition of the 50S ribosomal subunit IF-1, IF-2 and IF-3 are released leaving the mature 70S translation initiation complex. The sequence is that of Translation initiation factor IF-1 from Chloroflexus aurantiacus (strain ATCC 29366 / DSM 635 / J-10-fl).